The chain runs to 154 residues: uncharacterized protein (154 aa).

Positions 1-19 (MWSLKSTLCIALLVTYSVA) are cleaved as a signal peptide. ShKT domains are found at residues 67–102 (CADD…CGFC) and 113–150 (CVDS…CKLC). Intrachain disulfides connect cysteine 67–cysteine 102, cysteine 75–cysteine 95, cysteine 82–cysteine 99, cysteine 113–cysteine 150, cysteine 120–cysteine 143, and cysteine 129–cysteine 147.

This is an uncharacterized protein from Caenorhabditis elegans.